The following is a 285-amino-acid chain: uncharacterized protein (285 aa).

The interval 1 to 25 is disordered; it reads MANQKKKTLPPQHQNQQPGFEYLMD. Residue 45–69 participates in NADP(+) binding; it reads IITGGDSGIGRAVSVLFAKEGANVV. Ser-177 contributes to the substrate binding site. Catalysis depends on Tyr-190, which acts as the Proton acceptor.

The protein belongs to the short-chain dehydrogenases/reductases (SDR) family.

This is an uncharacterized protein from Bacillus subtilis (strain 168).